Consider the following 152-residue polypeptide: Anaerobic nitrite reductase SYMA (152 aa).

Positions 2-151 (ALTERQEALL…LVATIKAEMK (150 aa)) constitute a Globin domain. A Homodimerization motif is present at residues 35-39 (EAAPE). Heme b is bound by residues Ser-45, Lys-59, His-63, Arg-93, and His-98. The Homodimerization motif lies at 105 to 117 (DPHFEVMKGALLG).

It belongs to the plant globin family. Homodimer. It depends on heme b as a cofactor. In terms of tissue distribution, root nodules.

Its subcellular location is the cytoplasm. It localises to the nucleus. It catalyses the reaction Fe(III)-heme b-[protein] + nitric oxide + H2O = Fe(II)-heme b-[protein] + nitrite + 2 H(+). Its function is as follows. Phytoglobin that reduces nitrite to nitric oxide (NO) under anoxic conditions (e.g. during flooding or in waterlogged soil) and upon root nodulation. Required for general plant development and during nodulation, especially for the onset of symbiosis. Monitors nitric oxide (NO) levels during early phase of the nitrogen-fixing symbiosis and buffers oxygen in functioning nodules. May not function as an oxygen storage or transport protein. Has an unusually high affinity for O(2) through a hexacoordinate heme iron because of a very low dissociation constant. The sequence is that of Anaerobic nitrite reductase SYMA from Casuarina glauca (Swamp oak).